Here is a 468-residue protein sequence, read N- to C-terminus: Secretogranin-3 (468 aa).

The signal sequence occupies residues 1–19 (MGFLGTGTWILVLVLPIQA). Residues 23–69 (PGGSQDKSLHNRELSAERPLNEQIAEAEEDKIKKTYPPENKPGQSNY) are disordered. Positions 29-42 (KSLHNRELSAERPL) are enriched in basic and acidic residues. A Phosphoserine modification is found at Ser37. Ser37 is a glycosylation site (O-linked (Xyl...) (chondroitin sulfate) serine). O-linked (GalNAc...) threonine glycosylation is found at Thr216 and Thr231. A disordered region spans residues 353–406 (KLFPAPSEKSHEETDSTKEEAAKMEKEYGSLKDSTKDDNSNPGGKTDEPKGKTE). Residue Ser359 is glycosylated (O-linked (GalNAc...) serine). Basic and acidic residues predominate over residues 360-406 (EKSHEETDSTKEEAAKMEKEYGSLKDSTKDDNSNPGGKTDEPKGKTE). A Phosphoserine modification is found at Ser362.

Interacts with CHGA. Interacts with secretogranin II/SCG2. Interacts (via C-terminus) with CPE. Post-translationally, O-glycosylated. As to expression, detected in urine (at protein level). Expressed in brain, heart, kidney, liver and skeletal muscle.

It is found in the cytoplasmic vesicle. Its subcellular location is the secretory vesicle. The protein resides in the secretory vesicle membrane. It localises to the secreted. Its function is as follows. Member of the granin protein family that regulates the biogenesis of secretory granules. Acts as a sorting receptor for intragranular proteins including chromogranin A/CHGA. May also play a role in angiogenesis. Promotes endothelial proliferation, migration and tube formation through MEK/ERK signaling pathway. The chain is Secretogranin-3 (SCG3) from Homo sapiens (Human).